Here is a 188-residue protein sequence, read N- to C-terminus: Large ribosomal subunit protein eL18 (188 aa).

A disordered region spans residues H151 to K188. 2 stretches are compositionally biased toward basic residues: residues S161–G171 and R178–K188.

The protein belongs to the eukaryotic ribosomal protein eL18 family.

The protein localises to the cytoplasm. This chain is Large ribosomal subunit protein eL18 (RpL18), found in Lysiphlebus testaceipes (Greenbugs aphid parastoid).